Reading from the N-terminus, the 115-residue chain is Meiotically up-regulated gene 106 protein (115 aa).

Positions 1–34 (MSIKVEWIKFTRLKKCATLLVQLSLLRYRYMVLA) are cleaved as a signal peptide. 2 helical membrane-spanning segments follow: residues 41 to 60 (CIVVTIYCGCLFWFSNGALF) and 81 to 103 (GVKLKIFLFTILLAFETNTFTPY).

The protein resides in the membrane. Functionally, has a role in meiosis. This chain is Meiotically up-regulated gene 106 protein (mug106), found in Schizosaccharomyces pombe (strain 972 / ATCC 24843) (Fission yeast).